Reading from the N-terminus, the 398-residue chain is 8-amino-7-oxononanoate synthase (398 aa).

Residue R23 coordinates substrate. 110-111 serves as a coordination point for pyridoxal 5'-phosphate; the sequence is GY. H135 serves as a coordination point for substrate. S181, H209, and T237 together coordinate pyridoxal 5'-phosphate. Residue K240 is modified to N6-(pyridoxal phosphate)lysine. Residue T354 participates in substrate binding.

Belongs to the class-II pyridoxal-phosphate-dependent aminotransferase family. BioF subfamily. In terms of assembly, homodimer. Pyridoxal 5'-phosphate serves as cofactor.

It catalyses the reaction 6-carboxyhexanoyl-[ACP] + L-alanine + H(+) = (8S)-8-amino-7-oxononanoate + holo-[ACP] + CO2. It participates in cofactor biosynthesis; biotin biosynthesis. In terms of biological role, catalyzes the decarboxylative condensation of pimeloyl-[acyl-carrier protein] and L-alanine to produce 8-amino-7-oxononanoate (AON), [acyl-carrier protein], and carbon dioxide. The polypeptide is 8-amino-7-oxononanoate synthase (Anaeromyxobacter sp. (strain K)).